The following is a 92-amino-acid chain: uncharacterized protein (92 aa).

The first 29 residues, 1-29 (MAAQTDYKKQVVGILLSLAFVLFVFSFSE), serve as a signal peptide directing secretion.

This is an uncharacterized protein from Bacillus subtilis (strain 168).